Reading from the N-terminus, the 142-residue chain is 3-hydroxyacyl-[acyl-carrier-protein] dehydratase FabZ (142 aa).

Histidine 47 is an active-site residue.

This sequence belongs to the thioester dehydratase family. FabZ subfamily.

Its subcellular location is the cytoplasm. The enzyme catalyses a (3R)-hydroxyacyl-[ACP] = a (2E)-enoyl-[ACP] + H2O. Involved in unsaturated fatty acids biosynthesis. Catalyzes the dehydration of short chain beta-hydroxyacyl-ACPs and long chain saturated and unsaturated beta-hydroxyacyl-ACPs. The polypeptide is 3-hydroxyacyl-[acyl-carrier-protein] dehydratase FabZ (Coxiella burnetii (strain RSA 331 / Henzerling II)).